Reading from the N-terminus, the 173-residue chain is MAGALRKMAVYLGLVEDDRYDHRYADEYDDFEDFDEPLDERPSRNRSPRDDSRNNAVTDSSDHSPSRNERRSPAPAPATADLARITTLHPRTYNEARTIGEHFREGIPVIMNLTEMVDSDAKRLVDFAAGLIFGLHGSIERVTNKVFLLSPANVEVTAEDKARIAERGFFNQS.

Residues 31 to 82 form a disordered region; the sequence is FEDFDEPLDERPSRNRSPRDDSRNNAVTDSSDHSPSRNERRSPAPAPATADL. Basic and acidic residues-rich tracts occupy residues 39–53 and 60–72; these read DERPSRNRSPRDDSR and SSDHSPSRNERRS.

It belongs to the SepF family. As to quaternary structure, homodimer. Interacts with FtsZ.

It is found in the cytoplasm. Functionally, cell division protein that is part of the divisome complex and is recruited early to the Z-ring. Probably stimulates Z-ring formation, perhaps through the cross-linking of FtsZ protofilaments. Its function overlaps with FtsA. The polypeptide is Cell division protein SepF (Thermobifida fusca (strain YX)).